Reading from the N-terminus, the 342-residue chain is Guanine nucleotide-binding protein alpha-9 subunit (342 aa).

The N-myristoyl glycine moiety is linked to residue glycine 2. Residue cysteine 3 is the site of S-palmitoyl cysteine attachment. In terms of domain architecture, G-alpha spans 28-342 (REIKLLLLGS…IIQSILKLHY (315 aa)). Residues 31 to 44 (KLLLLGSGDSGKST) are G1 motif. GTP contacts are provided by residues 36-43 (GSGDSGKS), 167-173 (LRCRQRT), 192-196 (DVGGQ), 261-264 (NKND), and alanine 316. The Mg(2+) site is built by serine 43 and threonine 173. Positions 165–173 (DVLRCRQRT) are G2 motif. Residues 188 to 197 (FRLIDVGGQK) form a G3 motif region. The tract at residues 257–264 (VLFLNKND) is G4 motif. The interval 314 to 319 (TTATDT) is G5 motif.

It belongs to the G-alpha family. As to quaternary structure, g proteins are composed of 3 units; alpha, beta and gamma. The alpha chain contains the guanine nucleotide binding site.

In terms of biological role, guanine nucleotide-binding proteins (G proteins) are involved as modulators or transducers in various transmembrane signaling systems. G alpha-9 antagonizes broad chemotactic response. It functions rapidly following receptor stimulation to negatively regulate PI3K/PTEN, adenylyl cyclase, and guanylyl cyclase pathways. This Dictyostelium discoideum (Social amoeba) protein is Guanine nucleotide-binding protein alpha-9 subunit (gpaI).